Consider the following 106-residue polypeptide: Large ribosomal subunit protein eL42 (106 aa).

The Zn(2+) site is built by cysteine 12, cysteine 17, cysteine 74, and cysteine 77.

Belongs to the eukaryotic ribosomal protein eL42 family. As to quaternary structure, component of the large ribosomal subunit. Mature ribosomes consist of a small (40S) and a large (60S) subunit. The 40S subunit contains about 32 different proteins and 1 molecule of RNA (18S). The 60S subunit contains 45 different proteins and 3 molecules of RNA (25S, 5.8S and 5S). The cofactor is Zn(2+).

Its subcellular location is the cytoplasm. In terms of biological role, component of the ribosome, a large ribonucleoprotein complex responsible for the synthesis of proteins in the cell. The small ribosomal subunit (SSU) binds messenger RNAs (mRNAs) and translates the encoded message by selecting cognate aminoacyl-transfer RNA (tRNA) molecules. The large subunit (LSU) contains the ribosomal catalytic site termed the peptidyl transferase center (PTC), which catalyzes the formation of peptide bonds, thereby polymerizing the amino acids delivered by tRNAs into a polypeptide chain. The nascent polypeptides leave the ribosome through a tunnel in the LSU and interact with protein factors that function in enzymatic processing, targeting, and the membrane insertion of nascent chains at the exit of the ribosomal tunnel. In Candida albicans (strain SC5314 / ATCC MYA-2876) (Yeast), this protein is Large ribosomal subunit protein eL42 (RPL44).